We begin with the raw amino-acid sequence, 306 residues long: Hydroxypyruvate reductase (306 aa).

NAD(+) contacts are provided by residues 152-153 (NI), Asp-172, 228-230 (TAR), and Asp-254. Arg-230 is a catalytic residue. The active site involves Glu-259. Catalysis depends on His-280, which acts as the Proton donor. Residue 280-283 (HIGA) coordinates NAD(+).

The protein belongs to the D-isomer specific 2-hydroxyacid dehydrogenase family.

The enzyme catalyses (R)-glycerate + NAD(+) = 3-hydroxypyruvate + NADH + H(+). It carries out the reaction (R)-glycerate + NADP(+) = 3-hydroxypyruvate + NADPH + H(+). Involved in the degradation of L-serine via 3-hydroxypyruvate. Catalyzes the non-reversible reduction of 3-hydroxypyruvate to yield D-glycerate. In Thermotoga maritima (strain ATCC 43589 / DSM 3109 / JCM 10099 / NBRC 100826 / MSB8), this protein is Hydroxypyruvate reductase.